We begin with the raw amino-acid sequence, 290 residues long: Ribosomal RNA small subunit methyltransferase A (290 aa).

S-adenosyl-L-methionine-binding residues include Asn-27, Leu-29, Gly-54, Glu-75, Asp-100, and Asn-125.

The protein belongs to the class I-like SAM-binding methyltransferase superfamily. rRNA adenine N(6)-methyltransferase family. RsmA subfamily.

The protein localises to the cytoplasm. The catalysed reaction is adenosine(1518)/adenosine(1519) in 16S rRNA + 4 S-adenosyl-L-methionine = N(6)-dimethyladenosine(1518)/N(6)-dimethyladenosine(1519) in 16S rRNA + 4 S-adenosyl-L-homocysteine + 4 H(+). In terms of biological role, specifically dimethylates two adjacent adenosines (A1518 and A1519) in the loop of a conserved hairpin near the 3'-end of 16S rRNA in the 30S particle. May play a critical role in biogenesis of 30S subunits. The sequence is that of Ribosomal RNA small subunit methyltransferase A from Streptococcus agalactiae serotype Ia (strain ATCC 27591 / A909 / CDC SS700).